The chain runs to 377 residues: GDP-mannose 3,5-epimerase (377 aa).

G2 is subject to N-acetylglycine. NAD(+)-binding positions include 34-60, D58, and D78; that span reads GAGG…SDWK. Substrate-binding positions include G103 and 143–145; that span reads SAC. Residues Y174 and K178 each coordinate NAD(+). Y174 (proton acceptor) is an active-site residue. Substrate contacts are provided by residues N203, 216–218, K225, 241–243, R306, and S356; these read EKA and QTR. S369 carries the post-translational modification Phosphoserine.

This sequence belongs to the NAD(P)-dependent epimerase/dehydratase family. As to quaternary structure, homodimer. Interacts with chaperone Hsc70-3 protein, which may regulate epimerase activity. It depends on NAD(+) as a cofactor.

It carries out the reaction GDP-alpha-D-mannose = GDP-beta-L-gulose. The enzyme catalyses GDP-beta-L-gulose = GDP-beta-L-galactose. It functions in the pathway cofactor biosynthesis; L-ascorbate biosynthesis via GDP-alpha-D-mannose pathway; L-ascorbate from GDP-alpha-D-mannose: step 1/5. With respect to regulation, inhibited by GDP and GDP-D-glucose. Catalyzes a reversible epimerization of GDP-D-mannose that precedes the committed step in the biosynthesis of vitamin C (L-ascorbate), resulting in the hydrolysis of the highly energetic glycosyl-pyrophosphoryl linkage. Able to catalyze 2 distinct epimerization reactions and can release both GDP-L-galactose and GDP-L-gulose from GDP-mannose. The sequence is that of GDP-mannose 3,5-epimerase from Arabidopsis thaliana (Mouse-ear cress).